Consider the following 47-residue polypeptide: CLSVCSMEYWPVCGSDGKTYPNECHLTSEACMSNTDITVAHVGKCDQ.

Disulfide bonds link Cys1–Cys31, Cys5–Cys24, and Cys13–Cys45. The Kazal-like domain maps to 1–47 (CLSVCSMEYWPVCGSDGKTYPNECHLTSEACMSNTDITVAHVGKCDQ).

This sequence belongs to the conopeptide P-like superfamily. As to expression, expressed by the venom duct.

The protein resides in the secreted. Its function is as follows. Acts as a neurotoxin by inhibiting an ion channel. May also act as a serine protease inhibitor, since it possess the kazal serine protease inhibitor signature. The sequence is that of Turripeptide Ici9.1 from Iotyrris cingulifera (Sea snail).